The sequence spans 372 residues: 4-hydroxy-3-methylbut-2-en-1-yl diphosphate synthase (flavodoxin) (372 aa).

Residues Cys270, Cys273, Cys305, and Glu312 each contribute to the [4Fe-4S] cluster site.

It belongs to the IspG family. [4Fe-4S] cluster is required as a cofactor.

The enzyme catalyses (2E)-4-hydroxy-3-methylbut-2-enyl diphosphate + oxidized [flavodoxin] + H2O + 2 H(+) = 2-C-methyl-D-erythritol 2,4-cyclic diphosphate + reduced [flavodoxin]. It functions in the pathway isoprenoid biosynthesis; isopentenyl diphosphate biosynthesis via DXP pathway; isopentenyl diphosphate from 1-deoxy-D-xylulose 5-phosphate: step 5/6. Converts 2C-methyl-D-erythritol 2,4-cyclodiphosphate (ME-2,4cPP) into 1-hydroxy-2-methyl-2-(E)-butenyl 4-diphosphate. This chain is 4-hydroxy-3-methylbut-2-en-1-yl diphosphate synthase (flavodoxin), found in Shewanella amazonensis (strain ATCC BAA-1098 / SB2B).